Reading from the N-terminus, the 279-residue chain is 4-hydroxy-3-methylbut-2-enyl diphosphate reductase (279 aa).

Residue Cys12 coordinates [4Fe-4S] cluster. The (2E)-4-hydroxy-3-methylbut-2-enyl diphosphate site is built by His36 and His70. Residues His36 and His70 each coordinate dimethylallyl diphosphate. 2 residues coordinate isopentenyl diphosphate: His36 and His70. Residue Cys92 coordinates [4Fe-4S] cluster. His120 provides a ligand contact to (2E)-4-hydroxy-3-methylbut-2-enyl diphosphate. His120 is a binding site for dimethylallyl diphosphate. His120 serves as a coordination point for isopentenyl diphosphate. The active-site Proton donor is Glu122. Position 158 (Thr158) interacts with (2E)-4-hydroxy-3-methylbut-2-enyl diphosphate. Cys186 provides a ligand contact to [4Fe-4S] cluster. 4 residues coordinate (2E)-4-hydroxy-3-methylbut-2-enyl diphosphate: Ser214, Ser215, Asn216, and Ser258. Residues Ser214, Ser215, Asn216, and Ser258 each contribute to the dimethylallyl diphosphate site. Positions 214, 215, 216, and 258 each coordinate isopentenyl diphosphate.

The protein belongs to the IspH family. [4Fe-4S] cluster is required as a cofactor.

It catalyses the reaction isopentenyl diphosphate + 2 oxidized [2Fe-2S]-[ferredoxin] + H2O = (2E)-4-hydroxy-3-methylbut-2-enyl diphosphate + 2 reduced [2Fe-2S]-[ferredoxin] + 2 H(+). It carries out the reaction dimethylallyl diphosphate + 2 oxidized [2Fe-2S]-[ferredoxin] + H2O = (2E)-4-hydroxy-3-methylbut-2-enyl diphosphate + 2 reduced [2Fe-2S]-[ferredoxin] + 2 H(+). It participates in isoprenoid biosynthesis; dimethylallyl diphosphate biosynthesis; dimethylallyl diphosphate from (2E)-4-hydroxy-3-methylbutenyl diphosphate: step 1/1. It functions in the pathway isoprenoid biosynthesis; isopentenyl diphosphate biosynthesis via DXP pathway; isopentenyl diphosphate from 1-deoxy-D-xylulose 5-phosphate: step 6/6. In terms of biological role, catalyzes the conversion of 1-hydroxy-2-methyl-2-(E)-butenyl 4-diphosphate (HMBPP) into a mixture of isopentenyl diphosphate (IPP) and dimethylallyl diphosphate (DMAPP). Acts in the terminal step of the DOXP/MEP pathway for isoprenoid precursor biosynthesis. This is 4-hydroxy-3-methylbut-2-enyl diphosphate reductase from Campylobacter fetus subsp. fetus (strain 82-40).